A 569-amino-acid polypeptide reads, in one-letter code: Undecaprenyl phosphate-alpha-4-amino-4-deoxy-L-arabinose arabinosyl transferase 1 (569 aa).

Transmembrane regions (helical) follow at residues 27–47, 98–120, 129–149, 151–171, 194–214, 225–245, 275–295, 311–331, 334–354, 366–386, 396–416, and 420–440; these read GLILAFVMFYLLPLMSHGLWI, LFGVRIASALSTGVSVWLTYLLA, INAASALLYMSFGLIAGQAGY, NLDPQFTLWVNLSMVAVWFAI, LMTKGFLALLLPVLIALPYML, YGLVAVVVCALVSLPWVLAVH, PWWFYLPLLFASTLPWALLLP, AYLALWFLLPLAFFSLSSGKL, YIMPCLLPVALLMGQTVVKWL, GVFNTVLASVALVALLYLQAT, FSLSLAYIVVVGWIIANALQV, and LTLWAMPALGIGLLVALLPAA.

This sequence belongs to the glycosyltransferase 83 family.

It is found in the cell inner membrane. It carries out the reaction 4-amino-4-deoxy-alpha-L-arabinopyranosyl di-trans,octa-cis-undecaprenyl phosphate + lipid IVA = lipid IIA + di-trans,octa-cis-undecaprenyl phosphate.. The protein operates within lipopolysaccharide metabolism; 4-amino-4-deoxy-beta-L-arabinose-lipid A biosynthesis. Functionally, catalyzes the transfer of the L-Ara4N moiety of the glycolipid undecaprenyl phosphate-alpha-L-Ara4N to lipid A. The modified arabinose is attached to lipid A and is required for resistance to polymyxin and cationic antimicrobial peptides. This is Undecaprenyl phosphate-alpha-4-amino-4-deoxy-L-arabinose arabinosyl transferase 1 from Pseudomonas fluorescens (strain Pf0-1).